Here is a 201-residue protein sequence, read N- to C-terminus: Large ribosomal subunit protein eL15 (201 aa).

Belongs to the eukaryotic ribosomal protein eL15 family.

The sequence is that of Large ribosomal subunit protein eL15 (RPL15) from Quercus suber (Cork oak).